Reading from the N-terminus, the 134-residue chain is Transcription antitermination protein NusB (134 aa).

This sequence belongs to the NusB family.

Its function is as follows. Involved in transcription antitermination. Required for transcription of ribosomal RNA (rRNA) genes. Binds specifically to the boxA antiterminator sequence of the ribosomal RNA (rrn) operons. This is Transcription antitermination protein NusB from Halothermothrix orenii (strain H 168 / OCM 544 / DSM 9562).